Reading from the N-terminus, the 315-residue chain is Ribosomal protein L11 methyltransferase (315 aa).

The S-adenosyl-L-methionine site is built by Thr-152, Gly-185, Asp-207, and Asn-249.

The protein belongs to the methyltransferase superfamily. PrmA family.

The protein localises to the cytoplasm. It catalyses the reaction L-lysyl-[protein] + 3 S-adenosyl-L-methionine = N(6),N(6),N(6)-trimethyl-L-lysyl-[protein] + 3 S-adenosyl-L-homocysteine + 3 H(+). Methylates ribosomal protein L11. In Geotalea uraniireducens (strain Rf4) (Geobacter uraniireducens), this protein is Ribosomal protein L11 methyltransferase.